We begin with the raw amino-acid sequence, 55 residues long: Large ribosomal subunit protein bL33A (55 aa).

It belongs to the bacterial ribosomal protein bL33 family.

In Mycobacterium sp. (strain KMS), this protein is Large ribosomal subunit protein bL33A.